The following is a 425-amino-acid chain: F-box/LRR-repeat protein At3g59250 (425 aa).

Residues 6 to 54 form the F-box domain; it reads KDKISNLPEALICHILSFLPIEDSALTSVLSKRWRYLFAFRPNLVFDDS. LRR repeat units lie at residues 86–113, 138–163, 185–210, 264–293, and 294–319; these read DLQV…RIES, MLGK…VLNN, CTES…KYSD, CLSA…TIKT, and NQSV…VFEG.

In Arabidopsis thaliana (Mouse-ear cress), this protein is F-box/LRR-repeat protein At3g59250.